Here is an 899-residue protein sequence, read N- to C-terminus: DNA mismatch repair protein MutS (899 aa).

Positions 1-20 (MGLQKKTDPEQAQADSAASR) are disordered. ATP is bound at residue 631-638 (GPNMGGKS). Residues 832–852 (PPTPDDDEDDFGAAPSAVPAP) are disordered. Residues 843 to 852 (GAAPSAVPAP) are compositionally biased toward low complexity.

Belongs to the DNA mismatch repair MutS family.

This protein is involved in the repair of mismatches in DNA. It is possible that it carries out the mismatch recognition step. This protein has a weak ATPase activity. This chain is DNA mismatch repair protein MutS, found in Cupriavidus necator (strain ATCC 17699 / DSM 428 / KCTC 22496 / NCIMB 10442 / H16 / Stanier 337) (Ralstonia eutropha).